Here is a 137-residue protein sequence, read N- to C-terminus: Large ribosomal subunit protein uL16 (137 aa).

This sequence belongs to the universal ribosomal protein uL16 family. In terms of assembly, part of the 50S ribosomal subunit.

Its function is as follows. Binds 23S rRNA and is also seen to make contacts with the A and possibly P site tRNAs. The sequence is that of Large ribosomal subunit protein uL16 from Sorangium cellulosum (strain So ce56) (Polyangium cellulosum (strain So ce56)).